A 1178-amino-acid chain; its full sequence is F-box/WD repeat-containing protein A-like protein (1178 aa).

One can recognise an START domain in the interval 1–208; the sequence is MQYVNGMDIV…TLPNLIKYIK (208 aa). Disordered regions lie at residues 223–296, 569–594, and 618–649; these read KTPD…NLNE, SLII…DNGI, and SSSS…STFS. Composition is skewed to low complexity over residues 229–293 and 571–580; these read NPNL…SNEN and IINSPPNSNN. Residues 717–763 form the F-box domain; it reads CSLFDLLPYEMIQYIFTLMDATHLIRMSRTCKYFNRICLDDNIWRDL. Residues 804 to 841 are disordered; it reads KKSNNSSPLSASSSSSSPSPPLLPPPPPPIPQLPDMLL. The span at 809–820 shows a compositional bias: low complexity; sequence SSPLSASSSSSS. A compositionally biased stretch (pro residues) spans 821-835; sequence PSPPLLPPPPPPIPQ. WD repeat units lie at residues 886–923, 925–979, 981–1017, 1020–1059, 1062–1100, 1104–1141, and 1146–1178; these read GHKG…CEST, RCGA…IEKE, RFLY…ELQM, IENT…TELV, GHKG…SAIH, SHSS…EPNL, and NNLS…FNSK.

Its function is as follows. Substrate recognition component of a SCF (SKP1-CUL1-F-box protein) E3 ubiquitin-protein ligase complex which mediates the ubiquitination and subsequent proteasomal degradation of target proteins. This chain is F-box/WD repeat-containing protein A-like protein, found in Dictyostelium discoideum (Social amoeba).